The primary structure comprises 187 residues: MSKTNSETGNNFEQQKQELIAALKACGAVRYGDFTLASGKKSKYYIDIKKASTDPKTLKIIARQAALRIKEMDVDTVAGVELGGVPLATAVSLETELPLLIVRKSVKDYGTKSRFVGDLKPEDRLVMLEDVTTSGGSVRDAIEVVREAGASLKYVITVVDREEGAGEKLKEADVELVPLVSASDLLK.

5-phospho-alpha-D-ribose 1-diphosphate is bound by residues R103, K104, K107, and 129-137; that span reads EDVTTSGGS. Residues T133 and R161 each contribute to the orotate site.

This sequence belongs to the purine/pyrimidine phosphoribosyltransferase family. PyrE subfamily. Homodimer. The cofactor is Mg(2+).

The catalysed reaction is orotidine 5'-phosphate + diphosphate = orotate + 5-phospho-alpha-D-ribose 1-diphosphate. It functions in the pathway pyrimidine metabolism; UMP biosynthesis via de novo pathway; UMP from orotate: step 1/2. Its function is as follows. Catalyzes the transfer of a ribosyl phosphate group from 5-phosphoribose 1-diphosphate to orotate, leading to the formation of orotidine monophosphate (OMP). The chain is Orotate phosphoribosyltransferase from Methanosarcina mazei (strain ATCC BAA-159 / DSM 3647 / Goe1 / Go1 / JCM 11833 / OCM 88) (Methanosarcina frisia).